The following is a 704-amino-acid chain: Elongation factor G (704 aa).

Residues 8–290 enclose the tr-type G domain; sequence ARYRNIGISA…AVIDYLPSPV (283 aa). Residues 17–24, 88–92, and 142–145 each bind GTP; these read AHIDAGKT, DTPGH, and NKMD. Residues Lys504 and Lys643 each carry the N6-acetyllysine modification.

Belongs to the TRAFAC class translation factor GTPase superfamily. Classic translation factor GTPase family. EF-G/EF-2 subfamily.

It is found in the cytoplasm. Its function is as follows. Catalyzes the GTP-dependent ribosomal translocation step during translation elongation. During this step, the ribosome changes from the pre-translocational (PRE) to the post-translocational (POST) state as the newly formed A-site-bound peptidyl-tRNA and P-site-bound deacylated tRNA move to the P and E sites, respectively. Catalyzes the coordinated movement of the two tRNA molecules, the mRNA and conformational changes in the ribosome. In Shigella sonnei (strain Ss046), this protein is Elongation factor G.